The primary structure comprises 95 residues: Aspartyl/glutamyl-tRNA(Asn/Gln) amidotransferase subunit C (95 aa).

It belongs to the GatC family. In terms of assembly, heterotrimer of A, B and C subunits.

It carries out the reaction L-glutamyl-tRNA(Gln) + L-glutamine + ATP + H2O = L-glutaminyl-tRNA(Gln) + L-glutamate + ADP + phosphate + H(+). The catalysed reaction is L-aspartyl-tRNA(Asn) + L-glutamine + ATP + H2O = L-asparaginyl-tRNA(Asn) + L-glutamate + ADP + phosphate + 2 H(+). Its function is as follows. Allows the formation of correctly charged Asn-tRNA(Asn) or Gln-tRNA(Gln) through the transamidation of misacylated Asp-tRNA(Asn) or Glu-tRNA(Gln) in organisms which lack either or both of asparaginyl-tRNA or glutaminyl-tRNA synthetases. The reaction takes place in the presence of glutamine and ATP through an activated phospho-Asp-tRNA(Asn) or phospho-Glu-tRNA(Gln). This is Aspartyl/glutamyl-tRNA(Asn/Gln) amidotransferase subunit C from Geobacter sulfurreducens (strain ATCC 51573 / DSM 12127 / PCA).